Here is a 778-residue protein sequence, read N- to C-terminus: Transcription factor kayak (778 aa).

Low complexity-rich tracts occupy residues 24 to 54 (AQQLQHQQQQQQQQQQQTQLQQTPHAAHTQQ) and 77 to 98 (QYYQQQQQQQQQEQQMLRQRQL). Disordered regions lie at residues 24-57 (AQQLQHQQQQQQQQQQQTQLQQTPHAAHTQQNGL), 76-130 (NQYY…HQLR), 183-223 (QPTA…TTNG), 294-320 (APLVNNNNNNNGNGNGNGNGNGNVLAS), 356-414 (ASVM…GTGG), and 427-478 (RNTN…RKRR). Residues 99–108 (PTQQPAASYE) show a composition bias toward polar residues. Composition is skewed to low complexity over residues 109–130 (QQQQQPQQHQHLQQQQQQHQLR) and 183–222 (QPTAAVATTTPTQKATPTKTTPTNNPTTTTNNSTTTTTTN). Over residues 382–402 (ISDTSSGATDSTSYQNGHMMG) the composition is skewed to low complexity. Gly residues predominate over residues 403 to 414 (NSGGGNGGGTGG). Polar residues predominate over residues 427 to 436 (RNTNTSNSAT). In terms of domain architecture, bZIP spans 457 to 520 (EEKRRIRRER…NQLEYFLQAH (64 aa)). Positions 459 to 478 (KRRIRRERNKQAAARCRKRR) are basic motif. The tract at residues 485–513 (LTEEVELLEKRGENLKKEMELLNETKNQL) is leucine-zipper. Residues 550-571 (GSCGSGSSHHNNNSNSNDSSSG) are compositionally biased toward low complexity. Disordered stretches follow at residues 550 to 594 (GSCG…DLKP) and 756 to 778 (TSQNKHPLELPTPTTEPSKLVSL). Residues 579-589 (TLNSTGRSNSP) show a composition bias toward polar residues. Ser-588 is modified (phosphoserine).

It belongs to the bZIP family. Fos subfamily. Homodimer. Heterodimer with Jra. The kay-Jra heterodimer binds more stably to the AP-1 site than either of the two proteins alone.

The protein localises to the nucleus. Developmentally regulated transcription factor AP-1 binds and recognizes the enhancer DNA sequence: 5'-TGA[CG]TCA-3'. May play a role in the function or determination of a particular subset of cells in the developing embryo. It is able to carry out its function either independently of or in conjunction with Jra. This chain is Transcription factor kayak, found in Drosophila pseudoobscura pseudoobscura (Fruit fly).